Here is a 337-residue protein sequence, read N- to C-terminus: MIEIDGSFGEGGGQILRTSLTLSVITGKPFRIFNIRANRPNPGLQRQHLWAVKAMKMISNAETKGDEVGSKELIFVPHEIKGNINIDIDVGTAGSVTLIIQTVLPAIINKNVRIRIKGGTDVPKSPTIDYIRLVYLEILRKIGIEAKLNLIKRGHYPEGGGEVIIENVNGNPSAFSLLELGKLTIIKGISHVSSLPAHIAERQMNSARELLSKLGVPIEIQTDVRQGEVSKGSGIALAAIGEKSIIGADSLGERGKRAEIVGEEAARILIDNLNTKASVDIHMSDMLMIFASLYGGEYIGAELTSHAYTNMEIIKKFLDIKIDVSGKRPFRFKAKIF.

ATP contacts are provided by residues Gln101 and 282 to 285 (HMSD). The active-site Tele-AMP-histidine intermediate is the His306.

Belongs to the RNA 3'-terminal cyclase family. Type 1 subfamily.

Its subcellular location is the cytoplasm. The enzyme catalyses a 3'-end 3'-phospho-ribonucleotide-RNA + ATP = a 3'-end 2',3'-cyclophospho-ribonucleotide-RNA + AMP + diphosphate. Functionally, catalyzes the conversion of 3'-phosphate to a 2',3'-cyclic phosphodiester at the end of RNA. The mechanism of action of the enzyme occurs in 3 steps: (A) adenylation of the enzyme by ATP; (B) transfer of adenylate to an RNA-N3'P to produce RNA-N3'PP5'A; (C) and attack of the adjacent 2'-hydroxyl on the 3'-phosphorus in the diester linkage to produce the cyclic end product. The biological role of this enzyme is unknown but it is likely to function in some aspects of cellular RNA processing. In Saccharolobus islandicus (strain M.16.27) (Sulfolobus islandicus), this protein is RNA 3'-terminal phosphate cyclase.